The following is a 198-amino-acid chain: Endothelin-3 (198 aa).

Positions 1-16 are cleaved as a signal peptide; the sequence is MEPGLWLLFGLTVTSA. Residues 17–86 constitute a propeptide that is removed on maturation; the sequence is AGLVPCPQPG…SKGGPVHGRA (70 aa). The interval 22-79 is disordered; sequence CPQPGDAGKSGVPGTPPTARSEGDIQEPVAMTAVQGPSPRSPEQEQELGRFGEQASKG. 2 disulfide bridges follow: cysteine 89-cysteine 103 and cysteine 91-cysteine 99. Positions 110–198 are excised as a propeptide; it reads INTPEQTVPY…RGNGGLRPTR (89 aa). Positions 150-164 are endothelin-like; that stretch reads CACVQSQDSACLHFC. The tract at residues 174–198 is disordered; that stretch reads SRTATNPDKEEEPASRGNGGLRPTR.

Belongs to the endothelin/sarafotoxin family. As to expression, expressed in which included heart, lung, liver, kidney, spleen, stomach, pancreas, duodenum, colon, uterus, ovary and testis.

It localises to the secreted. In terms of biological role, endothelins are endothelium-derived vasoconstrictor peptides. In Canis lupus familiaris (Dog), this protein is Endothelin-3 (EDN3).